A 118-amino-acid chain; its full sequence is Large ribosomal subunit protein uL18 (118 aa).

The protein belongs to the universal ribosomal protein uL18 family. Part of the 50S ribosomal subunit; part of the 5S rRNA/L5/L18/L25 subcomplex. Contacts the 5S and 23S rRNAs.

In terms of biological role, this is one of the proteins that bind and probably mediate the attachment of the 5S RNA into the large ribosomal subunit, where it forms part of the central protuberance. The sequence is that of Large ribosomal subunit protein uL18 from Rickettsia canadensis (strain McKiel).